The following is a 669-amino-acid chain: DNA ligase (669 aa).

NAD(+) is bound by residues 34–38, 83–84, and Glu114; these read DAEYD and SL. Lys116 serves as the catalytic N6-AMP-lysine intermediate. NAD(+)-binding residues include Arg137, Glu171, Lys287, and Lys311. Zn(2+) is bound by residues Cys405, Cys408, Cys423, and Cys428. The BRCT domain maps to 591 to 669; it reads NIASYFAGKT…EERFLQELNK (79 aa).

The protein belongs to the NAD-dependent DNA ligase family. LigA subfamily. It depends on Mg(2+) as a cofactor. Mn(2+) serves as cofactor.

The catalysed reaction is NAD(+) + (deoxyribonucleotide)n-3'-hydroxyl + 5'-phospho-(deoxyribonucleotide)m = (deoxyribonucleotide)n+m + AMP + beta-nicotinamide D-nucleotide.. In terms of biological role, DNA ligase that catalyzes the formation of phosphodiester linkages between 5'-phosphoryl and 3'-hydroxyl groups in double-stranded DNA using NAD as a coenzyme and as the energy source for the reaction. It is essential for DNA replication and repair of damaged DNA. This chain is DNA ligase, found in Bacillus cytotoxicus (strain DSM 22905 / CIP 110041 / 391-98 / NVH 391-98).